The following is a 350-amino-acid chain: ATPase GET3 (350 aa).

26 to 33 contacts ATP; sequence KGGVGKTT. Asp-57 is a catalytic residue. Residues Glu-243 and Asn-270 each coordinate ATP. Zn(2+) is bound by residues Cys-282 and Cys-285.

This sequence belongs to the arsA ATPase family. As to quaternary structure, homodimer. Component of the Golgi to ER traffic (GET) complex, which is composed of GET1, GET2 and GET3. Within the complex, GET1 and GET2 form a heterotetramer which is stabilized by phosphatidylinositol binding and which binds to the GET3 homodimer. Interacts with the chloride channel protein GEF1.

The protein localises to the cytoplasm. It is found in the endoplasmic reticulum. The protein resides in the golgi apparatus. In terms of biological role, ATPase required for the post-translational delivery of tail-anchored (TA) proteins to the endoplasmic reticulum. Recognizes and selectively binds the transmembrane domain of TA proteins in the cytosol. This complex then targets to the endoplasmic reticulum by membrane-bound receptors GET1 and GET2, where the tail-anchored protein is released for insertion. This process is regulated by ATP binding and hydrolysis. ATP binding drives the homodimer towards the closed dimer state, facilitating recognition of newly synthesized TA membrane proteins. ATP hydrolysis is required for insertion. Subsequently, the homodimer reverts towards the open dimer state, lowering its affinity for the GET1-GET2 receptor, and returning it to the cytosol to initiate a new round of targeting. Cooperates with the HDEL receptor ERD2 to mediate the ATP-dependent retrieval of resident ER proteins that contain a C-terminal H-D-E-L retention signal from the Golgi to the ER. Involved in low-level resistance to the oxyanions arsenite and arsenate, and in heat tolerance. This Candida dubliniensis (strain CD36 / ATCC MYA-646 / CBS 7987 / NCPF 3949 / NRRL Y-17841) (Yeast) protein is ATPase GET3.